A 430-amino-acid chain; its full sequence is Enolase (430 aa).

Gln-167 is a binding site for (2R)-2-phosphoglycerate. Glu-209 serves as the catalytic Proton donor. Mg(2+) is bound by residues Asp-246, Glu-287, and Asp-314. (2R)-2-phosphoglycerate is bound by residues Lys-339, Arg-368, Ser-369, and Lys-390. The active-site Proton acceptor is Lys-339.

It belongs to the enolase family. It depends on Mg(2+) as a cofactor.

It is found in the cytoplasm. The protein localises to the secreted. Its subcellular location is the cell surface. It catalyses the reaction (2R)-2-phosphoglycerate = phosphoenolpyruvate + H2O. The protein operates within carbohydrate degradation; glycolysis; pyruvate from D-glyceraldehyde 3-phosphate: step 4/5. Functionally, catalyzes the reversible conversion of 2-phosphoglycerate (2-PG) into phosphoenolpyruvate (PEP). It is essential for the degradation of carbohydrates via glycolysis. The sequence is that of Enolase from Prochlorococcus marinus (strain MIT 9312).